Here is a 362-residue protein sequence, read N- to C-terminus: Putative glutamate--cysteine ligase 2-1 (362 aa).

The protein belongs to the glutamate--cysteine ligase type 2 family. YbdK subfamily.

The enzyme catalyses L-cysteine + L-glutamate + ATP = gamma-L-glutamyl-L-cysteine + ADP + phosphate + H(+). In terms of biological role, ATP-dependent carboxylate-amine ligase which exhibits weak glutamate--cysteine ligase activity. The chain is Putative glutamate--cysteine ligase 2-1 from Streptomyces avermitilis (strain ATCC 31267 / DSM 46492 / JCM 5070 / NBRC 14893 / NCIMB 12804 / NRRL 8165 / MA-4680).